Reading from the N-terminus, the 393-residue chain is Chalcone synthase 2 (393 aa).

Residue C166 is part of the active site.

It belongs to the thiolase-like superfamily. Chalcone/stilbene synthases family.

It catalyses the reaction (E)-4-coumaroyl-CoA + 3 malonyl-CoA + 3 H(+) = 2',4,4',6'-tetrahydroxychalcone + 3 CO2 + 4 CoA. It functions in the pathway secondary metabolite biosynthesis; flavonoid biosynthesis. Functionally, the primary product of this enzyme is 4,2',4',6'-tetrahydroxychalcone (also termed naringenin-chalcone or chalcone) which can under specific conditions spontaneously isomerize into naringenin. The sequence is that of Chalcone synthase 2 (CHS2) from Ruta graveolens (Common rue).